The following is a 917-amino-acid chain: Auxin response factor 17 (917 aa).

Positions 134–236 (FCKTLTASDT…QLLLGIRRAN (103 aa)) form a DNA-binding region, TF-B3. The tract at residues 571 to 649 (SVPNALSPFS…RPTAVPVPDP (79 aa)) is disordered. Low complexity-rich tracts occupy residues 576–594 (LSPFSQLSSPSQSSPMTLQ) and 604–620 (SYPDTSMSSLSPSNTST). The PB1 domain occupies 786-870 (ATFVKVYKSG…SCIKILSPQE (85 aa)).

This sequence belongs to the ARF family. Homodimers and heterodimers.

Its subcellular location is the nucleus. Auxin response factors (ARFs) are transcriptional factors that bind specifically to the DNA sequence 5'-TGTCTC-3' found in the auxin-responsive promoter elements (AuxREs). The chain is Auxin response factor 17 (ARF17) from Oryza sativa subsp. indica (Rice).